Reading from the N-terminus, the 898-residue chain is Serine/threonine-protein kinase TAO3 (898 aa).

The Protein kinase domain maps to 24 to 277 (FIGLHEIGHG…SAELLRHDFV (254 aa)). ATP is bound by residues 30 to 38 (IGHGSFGAV) and K53. D147 acts as the Proton acceptor in catalysis. Disordered regions lie at residues 316–362 (TRNG…SQSS) and 405–425 (DEAG…VQSQ). The residue at position 324 (S324) is a Phosphoserine; by ATM. Phosphoserine is present on residues S331, S343, S346, and S349. The segment covering 334–351 (GTSLNREMDSLGSNHSIP) has biased composition (polar residues). Over residues 352–362 (SMSVSTGSQSS) the composition is skewed to low complexity. A Phosphothreonine modification is found at T357. S359 carries the phosphoserine modification. The span at 405-416 (DEAGHGDPRPEP) shows a compositional bias: basic and acidic residues. S442 is subject to Phosphoserine. 3 coiled-coil regions span residues 452-502 (EQEN…THAN), 548-649 (FLES…HAML), and 754-879 (LKTL…DMES). Residues 565–596 (EEMNEDHSTPKKEKQERISKHKENLQHTQAEE) are disordered. An N6-acetyllysine modification is found at K830.

It belongs to the protein kinase superfamily. STE Ser/Thr protein kinase family. STE20 subfamily. In terms of assembly, self-associates. Interacts with ERN1 and TRAF2. Interaction with TRAF2 is facilitated under ER stress conditions, such as treatment with tunicamycin, and may promote TRAF2 phosphorylation. Interacts (via N-terminus) with STK25; the interaction promotes STK25 abundance at the level of protein expression and/or stability. Autophosphorylated. Phosphorylation at Ser-324 by ATM following DNA damage is required for activation of the p38/MAPK14 stress-activated MAPK cascade. Phosphorylated at Ser-324 and on Tyr residues during T cell activation. Phosphorylated by LRRK2.

It is found in the cytoplasm. The protein resides in the cell membrane. It localises to the membrane raft. Its subcellular location is the lipid droplet. The catalysed reaction is L-seryl-[protein] + ATP = O-phospho-L-seryl-[protein] + ADP + H(+). The enzyme catalyses L-threonyl-[protein] + ATP = O-phospho-L-threonyl-[protein] + ADP + H(+). Serine/threonine-protein kinase that acts as a regulator of the p38/MAPK14 stress-activated MAPK cascade and of the MAPK8/JNK cascade. In response to DNA damage, involved in the G2/M transition DNA damage checkpoint by activating the p38/MAPK14 stress-activated MAPK cascade, probably by mediating phosphorylation of upstream MAP2K3 and MAP2K6 kinases. Inhibits basal activity of the MAPK8/JNK cascade and diminishes its activation in response to epidermal growth factor (EGF). Positively regulates canonical T cell receptor (TCR) signaling by preventing early PTPN6/SHP1-mediated inactivation of LCK, ensuring sustained TCR signaling that is required for optimal activation and differentiation of T cells. Phosphorylates PTPN6/SHP1 on 'Thr-394', leading to its polyubiquitination and subsequent proteasomal degradation. Required for cell surface expression of metalloprotease ADAM10 on type 1 transitional B cells which is necessary for their NOTCH-mediated development into marginal zone B cells. Also required for the NOTCH-mediated terminal differentiation of splenic conventional type 2 dendritic cells. Positively regulates osteoblast differentiation by acting as an upstream activator of the JNK pathway. Promotes JNK signaling in hepatocytes and positively regulates hepatocyte lipid storage by inhibiting beta-oxidation and triacylglycerol secretion while enhancing lipid synthesis. Restricts age-associated inflammation by negatively regulating differentiation of macrophages and their production of pro-inflammatory cytokines. Plays a role in negatively regulating the abundance of regulatory T cells in white adipose tissue. This Pongo abelii (Sumatran orangutan) protein is Serine/threonine-protein kinase TAO3 (TAOK3).